The chain runs to 37 residues: Delta-amaurobitoxin-Pl1a (37 aa).

4 disulfide bridges follow: C2–C18, C9–C23, C17–C33, and C25–C31. A Serine amide modification is found at S37.

This sequence belongs to the neurotoxin 07 (Beta/delta-agtx) family. 02 (aga-3) subfamily. As to expression, expressed by the venom gland.

It is found in the secreted. Its function is as follows. Binds at site 4 of sodium channels (Nav) and inhibits the fast inactivation of cockroach channels. This toxin is active only on insects. Has a potent activity against S.litura larvae. The sequence is that of Delta-amaurobitoxin-Pl1a from Pireneitega luctuosa (Tangled nest spider).